A 68-amino-acid polypeptide reads, in one-letter code: Large ribosomal subunit protein uL29 (68 aa).

The protein belongs to the universal ribosomal protein uL29 family.

This is Large ribosomal subunit protein uL29 from Bradyrhizobium diazoefficiens (strain JCM 10833 / BCRC 13528 / IAM 13628 / NBRC 14792 / USDA 110).